A 1857-amino-acid chain; its full sequence is Fer-1-like protein 6 (1857 aa).

Over 1–1824 the chain is Cytoplasmic; sequence MFGLKVKKKR…YLIWKNYKKY (1824 aa). Residues 15–63 form a disordered region; sequence KGLILANKAAKDSQGDTEALQEEPSHQEGPRGDLVHDDASIFPVPSASP. Over residues 37 to 53 the composition is skewed to basic and acidic residues; that stretch reads EPSHQEGPRGDLVHDDA. 2 consecutive C2 domains span residues 65-181 and 225-356; these read RRSK…QFCN and PIEK…DKGF. The span at 426–447 shows a compositional bias: basic and acidic residues; it reads SKDKDSKSSKGKDKADKTEDGK. A disordered region spans residues 426-469; that stretch reads SKDKDSKSSKGKDKADKTEDGKSQQASNKTNSTEVEVESFDVPP. A compositionally biased stretch (polar residues) spans 448 to 459; that stretch reads SQQASNKTNSTE. 2 C2 domains span residues 810–937 and 969–1099; these read GTNH…RLCY and PVEP…LAPI. Positions 842, 848, 904, and 906 each coordinate Ca(2+). Disordered regions lie at residues 1101 to 1148, 1161 to 1203, and 1224 to 1246; these read QVDG…VVPD, PDSS…RTIA, and AQKA…PDEV. Over residues 1113–1129 the composition is skewed to polar residues; that stretch reads DSLTATESSGAHSSSQD. A compositionally biased stretch (basic and acidic residues) spans 1178-1189; that stretch reads PPKDGKPKDPRK. Positions 1190-1200 are enriched in basic residues; sequence PSRRSTKRRKR. Basic and acidic residues predominate over residues 1226–1245; it reads KAKERNPKGKKGNTEAKPDE. C2 domains follow at residues 1338-1457 and 1578-1729; these read DSGQ…AICG and DMPQ…KACD. The Ca(2+) site is built by Asp-1372, Asp-1378, Asp-1427, Asp-1429, and Asp-1435. A helical membrane pass occupies residues 1825 to 1845; the sequence is IIIAFILIILIIFLVLFIYTL. At 1846–1857 the chain is on the extracellular side; sequence PGAISRRIVVGS.

Belongs to the ferlin family. Requires Ca(2+) as cofactor.

The protein localises to the membrane. The chain is Fer-1-like protein 6 (FER1L6) from Homo sapiens (Human).